Here is a 565-residue protein sequence, read N- to C-terminus: NAD-dependent malic enzyme (565 aa).

The active-site Proton donor is Tyr-104. Residue Arg-157 coordinates NAD(+). Lys-175 functions as the Proton acceptor in the catalytic mechanism. Positions 246, 247, and 270 each coordinate a divalent metal cation. Residues Asp-270 and Asn-418 each contribute to the NAD(+) site.

This sequence belongs to the malic enzymes family. Homotetramer. Mg(2+) serves as cofactor. The cofactor is Mn(2+).

It carries out the reaction (S)-malate + NAD(+) = pyruvate + CO2 + NADH. The catalysed reaction is oxaloacetate + H(+) = pyruvate + CO2. The sequence is that of NAD-dependent malic enzyme from Shigella boydii serotype 18 (strain CDC 3083-94 / BS512).